The sequence spans 525 residues: Mannuronan C5-epimerase AlgG (525 aa).

A signal peptide spans 1–29 (MNVQRKLASTQLKPVLLGVLLATSAWSQA). 5 PbH1 repeats span residues 287 to 309 (ADDV…DPHD), 311 to 334 (SERL…IVSR), 336 to 358 (VNNS…VLDR), 360 to 382 (SEHN…TLYE), and 383 to 405 (SSNN…RMRN). The Proton acceptor role is filled by H308.

Belongs to the D-mannuronate C5-epimerase family.

It is found in the periplasm. It carries out the reaction [(1-&gt;4)-beta-D-mannuronosyl](n) = [alginate](n). Its pathway is glycan biosynthesis; alginate biosynthesis. Inhibited by zinc. In terms of biological role, catalyzes the epimerization of beta-D-mannuronate to alpha-L-guluronate during the synthesis of the linear polysaccharide alginate. In addition, is part of a periplasmic protein complex that protects alginate from degradation by AlgL by channeling the newly formed alginate polymer through a scaffold that transfers the alginate polymer through the periplasmic space to the outer membrane secretin AlgE. The protein is Mannuronan C5-epimerase AlgG of Azotobacter vinelandii.